A 391-amino-acid chain; its full sequence is Phosphoglycerate kinase (391 aa).

Substrate-binding positions include 21-23, arginine 36, 59-62, arginine 114, and arginine 147; these read DLN and HLGR. ATP contacts are provided by residues lysine 198, glutamate 315, and 344 to 347; that span reads GGDT.

The protein belongs to the phosphoglycerate kinase family. In terms of assembly, monomer.

Its subcellular location is the cytoplasm. It catalyses the reaction (2R)-3-phosphoglycerate + ATP = (2R)-3-phospho-glyceroyl phosphate + ADP. It participates in carbohydrate degradation; glycolysis; pyruvate from D-glyceraldehyde 3-phosphate: step 2/5. This Actinobacillus succinogenes (strain ATCC 55618 / DSM 22257 / CCUG 43843 / 130Z) protein is Phosphoglycerate kinase.